A 159-amino-acid polypeptide reads, in one-letter code: MSHLIDISIDDSALPPPTPEIEQERKVAIFDLLEDNSFKLPAREDRDVPPGPFSLTLAIRERRLVFDVTGPEGAQVAEFHLSLGPFRQVVKDYWQICESYFDAVKKLPPSQIEAIDMARRGIHNEGARILLERLDGKAEVDIDTSRRLFTLICVLHFGA.

It belongs to the UPF0262 family.

The sequence is that of UPF0262 protein Dshi_0980 from Dinoroseobacter shibae (strain DSM 16493 / NCIMB 14021 / DFL 12).